The primary structure comprises 420 residues: F420-non-reducing hydrogenase vhu subunit A (420 aa).

Residues cysteine 61 and cysteine 64 each contribute to the Ni(2+) site.

The protein belongs to the [NiFe]/[NiFeSe] hydrogenase large subunit family. The F420-non-reducing hydrogenase vhu is composed of four subunits; VhuA, VhuD, VhuG and VhuU. Ni(2+) is required as a cofactor.

In Methanococcus voltae, this protein is F420-non-reducing hydrogenase vhu subunit A (vhuA).